A 147-amino-acid polypeptide reads, in one-letter code: Large ribosomal subunit protein uL15 (147 aa).

The segment at 1 to 42 (MTIKVHHLRPAPGAKTAKTRVGRGEGSKGKTAGRGTKGSKAR) is disordered.

Belongs to the universal ribosomal protein uL15 family. As to quaternary structure, part of the 50S ribosomal subunit.

Functionally, binds to the 23S rRNA. This Salinispora arenicola (strain CNS-205) protein is Large ribosomal subunit protein uL15.